Consider the following 221-residue polypeptide: MNRLIVLCLFVAMIYATIALPKKEDISNDERSISVSKVPVKKSVAIAGAVIEGAKLTFGILEKILTVLGDINRKIAIGVDNESGREWTAQNAYFFSGTSDVVLPASVPNTKAFLYNAQKDRGPVATGVVGVLAYSLSNGNTLGILFSVPYDYNLYSNWWNIKLYKGIKRADRDMYNDLYYYAHPHKGDNGWHENSLGFGLKSKGFMTSSGQTILQIRVSRA.

The first 19 residues, 1-19, serve as a signal peptide directing secretion; the sequence is MNRLIVLCLFVAMIYATIA. A propeptide spanning residues 20–42 is cleaved from the precursor; sequence LPKKEDISNDERSISVSKVPVKK. The segment at 45-54 is plays an important role in the hemolytic activity; the sequence is AIAGAVIEGA. The segment at 53-72 is N-terminal region; it reads GAKLTFGILEKILTVLGDIN. Residues S96, V129, S147, P149, Y175, Y179, and Y180 each contribute to the phosphocholine site. The interval 147–162 is trp-rich region, which is important for the binding to lipid membrane; the sequence is SVPYDYNLYSNWWNIK. The short motif at 186–188 is the Cell attachment site, crucial for protein stability element; the sequence is KGD.

It belongs to the actinoporin family. Sea anemone subfamily. In terms of assembly, octamer or nonamer in membranes. Monomer in the soluble state.

The protein resides in the secreted. The protein localises to the nematocyst. It is found in the target cell membrane. Its function is as follows. Pore-forming protein that forms cations-selective hydrophilic pores of around 1 nm and causes cytolysis. Pore formation is a multi-step process that involves specific recognition of membrane sphingomyelin (but neither cholesterol nor phosphatidylcholine) using aromatic rich region and adjacent phosphocholine (POC) binding site, firm binding to the membrane (mainly driven by hydrophobic interactions) accompanied by the transfer of the N-terminal region to the lipid-water interface and finally pore formation after oligomerization of monomers. This chain is DELTA-actitoxin-Ucs1a, found in Urticina crassicornis (Mottled anemone).